We begin with the raw amino-acid sequence, 209 residues long: Large ribosomal subunit protein uL3 (209 aa).

The tract at residues 133 to 153 (THGNSLSHRVPGSIGQNQTPG) is disordered. Gln-150 bears the N5-methylglutamine mark.

Belongs to the universal ribosomal protein uL3 family. In terms of assembly, part of the 50S ribosomal subunit. Forms a cluster with proteins L14 and L19. Methylated by PrmB.

One of the primary rRNA binding proteins, it binds directly near the 3'-end of the 23S rRNA, where it nucleates assembly of the 50S subunit. This is Large ribosomal subunit protein uL3 from Serratia proteamaculans (strain 568).